A 108-amino-acid chain; its full sequence is Large ribosomal subunit protein eL30 (108 aa).

The protein belongs to the eukaryotic ribosomal protein eL30 family.

The polypeptide is Large ribosomal subunit protein eL30 (rpl30e) (Saccharolobus solfataricus (strain ATCC 35092 / DSM 1617 / JCM 11322 / P2) (Sulfolobus solfataricus)).